The sequence spans 116 residues: Tyrosine-protein phosphatase 10 (116 aa).

Residues 1–116 (WRMVWEQNVS…SPTGYGPIVV (116 aa)) enclose the Tyrosine-protein phosphatase domain. A substrate-binding site is contributed by Asp86.

Belongs to the protein-tyrosine phosphatase family.

The catalysed reaction is O-phospho-L-tyrosyl-[protein] + H2O = L-tyrosyl-[protein] + phosphate. This Styela plicata (Wrinkled sea squirt) protein is Tyrosine-protein phosphatase 10 (STY-10).